The following is a 332-amino-acid chain: MGFITRFLVFMSLFTSLVSGFALQKLPLIQFDEGYTQLFGDQNLIVHRDGKSVRLTLDERTGSGFVSNDIYLHGFFSSSIKLPADYSAGVVIAFYLSNGDLYEKNHDEIDFEFLGNIRGREWRIQTNIYGNGSTHLGREERYNLWFDPTEDFHQYSILWSLSHIIFYVDNVPIREVKRTASMGGDFPAKPMSLYSTIWDGSKWATDGGKYGVNYKYAPYVSQFTDLILHGCAVDPTEKFPSCKDEAVQNLRLASEITESQRNKMEIFRQKHMTYSYCYDHMRYKVVLSECVVNPAEAKRLRVYDPVTFGGIPHGHRRGKHRSRSRLARTESI.

The N-terminal stretch at 1–22 (MGFITRFLVFMSLFTSLVSGFA) is a signal peptide. The GH16 domain occupies 23–223 (LQKLPLIQFD…YKYAPYVSQF (201 aa)). Glu-108 acts as the Nucleophile in catalysis. Catalysis depends on Glu-112, which acts as the Proton donor. Residues Glu-112 and 125–127 (QTN) contribute to the xyloglucan site. Residue Asn-131 is glycosylated (N-linked (GlcNAc...) asparagine). Xyloglucan is bound by residues 135 to 139 (HLGRE), 202 to 203 (KW), Gly-207, and Arg-282. Cys-277 and Cys-290 form a disulfide bridge. Basic residues predominate over residues 313–326 (HGHRRGKHRSRSRL). The interval 313–332 (HGHRRGKHRSRSRLARTESI) is disordered.

This sequence belongs to the glycosyl hydrolase 16 family. XTH group 3 subfamily. Post-translationally, contains at least one intrachain disulfide bond essential for its enzymatic activity. Expressed in 7 day old seedlings, roots, rosette leaves, internodes between nodes bearing axillary shoots, nodes bearing flowers, flower buds and siliques.

The protein resides in the secreted. The protein localises to the cell wall. It is found in the extracellular space. It localises to the apoplast. The enzyme catalyses breaks a beta-(1-&gt;4) bond in the backbone of a xyloglucan and transfers the xyloglucanyl segment on to O-4 of the non-reducing terminal glucose residue of an acceptor, which can be a xyloglucan or an oligosaccharide of xyloglucan.. Catalyzes xyloglucan endohydrolysis (XEH) and/or endotransglycosylation (XET). Cleaves and religates xyloglucan polymers, an essential constituent of the primary cell wall, and thereby participates in cell wall construction of growing tissues. In Arabidopsis thaliana (Mouse-ear cress), this protein is Probable xyloglucan endotransglucosylase/hydrolase protein 28 (XTH28).